The following is a 336-amino-acid chain: Calcium uniporter protein 3, mitochondrial (336 aa).

Residues 1-69 constitute a mitochondrion transit peptide; that stretch reads MAMRKLLSKK…RFMHNSAMIR (69 aa). The next 2 membrane-spanning stretches (helical) occupy residues 231–251 and 257–277; these read LWAG…LTFW and VMEP…YAFF. Positions 255 to 263 match the Selectivity filter motif; sequence WDVMEPICF. Ca(2+) is bound at residue glutamate 259.

This sequence belongs to the MCU (TC 1.A.77) family.

It is found in the mitochondrion inner membrane. The catalysed reaction is Ca(2+)(in) = Ca(2+)(out). Its function is as follows. Mitochondrial inner membrane calcium uniporter that mediates calcium uptake into mitochondria. Constitutes a pore-forming and calcium-conducting subunit. Mitochondrial calcium homeostasis plays key roles in cellular physiology and regulates cell bioenergetics, cytoplasmic calcium signals and activation of cell death pathways. The polypeptide is Calcium uniporter protein 3, mitochondrial (Arabidopsis thaliana (Mouse-ear cress)).